A 363-amino-acid polypeptide reads, in one-letter code: Peptide chain release factor 1 (363 aa).

Q237 bears the N5-methylglutamine mark.

The protein belongs to the prokaryotic/mitochondrial release factor family. In terms of processing, methylated by PrmC. Methylation increases the termination efficiency of RF1.

The protein localises to the cytoplasm. Its function is as follows. Peptide chain release factor 1 directs the termination of translation in response to the peptide chain termination codons UAG and UAA. The chain is Peptide chain release factor 1 (prfA) from Mycoplasma capricolum subsp. capricolum (strain California kid / ATCC 27343 / NCTC 10154).